We begin with the raw amino-acid sequence, 513 residues long: GTPase Obg (513 aa).

The Obg domain maps to 3 to 160; that stretch reads THFVDRVVVH…LDLHLEVKTL (158 aa). In terms of domain architecture, OBG-type G spans 161-337; it reads ADVALVGFPS…LSFAMAELVS (177 aa). GTP is bound by residues 167 to 174, 192 to 196, 213 to 216, 289 to 292, and 318 to 320; these read GFPSAGKS, FTTLV, DVPG, NKAD, and SAV. Mg(2+)-binding residues include Ser-174 and Thr-194. The OCT domain maps to 355 to 444; the sequence is PRAVDDQGFK…ANAVVFDWEP (90 aa). The segment at 457–513 is disordered; that stretch reads GSDLRLEDHSRPTRDEKRLQERERRAAKVTARDELEAERRAGHWTAADEADEELSQR. A compositionally biased stretch (basic and acidic residues) spans 458–497; sequence SDLRLEDHSRPTRDEKRLQERERRAAKVTARDELEAERRA. The span at 504-513 shows a compositional bias: acidic residues; sequence DEADEELSQR.

It belongs to the TRAFAC class OBG-HflX-like GTPase superfamily. OBG GTPase family. Monomer. Mg(2+) is required as a cofactor.

The protein resides in the cytoplasm. Functionally, an essential GTPase which binds GTP, GDP and possibly (p)ppGpp with moderate affinity, with high nucleotide exchange rates and a fairly low GTP hydrolysis rate. Plays a role in control of the cell cycle, stress response, ribosome biogenesis and in those bacteria that undergo differentiation, in morphogenesis control. This is GTPase Obg from Kineococcus radiotolerans (strain ATCC BAA-149 / DSM 14245 / SRS30216).